The following is a 61-amino-acid chain: Small ribosomal subunit protein uS14B (61 aa).

The Zn(2+) site is built by cysteine 24, cysteine 27, cysteine 40, and cysteine 43.

Belongs to the universal ribosomal protein uS14 family. Zinc-binding uS14 subfamily. Part of the 30S ribosomal subunit. Contacts proteins S3 and S10. Zn(2+) is required as a cofactor.

Binds 16S rRNA, required for the assembly of 30S particles and may also be responsible for determining the conformation of the 16S rRNA at the A site. This Levilactobacillus brevis (strain ATCC 367 / BCRC 12310 / CIP 105137 / JCM 1170 / LMG 11437 / NCIMB 947 / NCTC 947) (Lactobacillus brevis) protein is Small ribosomal subunit protein uS14B.